The chain runs to 84 residues: U21-theraphotoxin-Cg1a 2 (84 aa).

The N-terminal stretch at Met-1–Ala-21 is a signal peptide. Positions Glu-22–Arg-47 are excised as a propeptide. Disulfide bonds link Cys-49-Cys-63, Cys-56-Cys-68, and Cys-62-Cys-76. Residue Val-82 is modified to Valine amide.

The protein belongs to the neurotoxin 10 (Hwtx-1) family. 05 (F4a) subfamily. In terms of tissue distribution, expressed by the venom gland.

It is found in the secreted. In terms of biological role, probable ion channel inhibitor. This is U21-theraphotoxin-Cg1a 2 from Chilobrachys guangxiensis (Chinese earth tiger tarantula).